We begin with the raw amino-acid sequence, 765 residues long: Mitochondrial 15S rRNA processing factor CCM1 (765 aa).

The N-terminal 63 residues, 1 to 63 (MIRLIRGNNV…ITDRNQTSRT (63 aa)), are a transit peptide targeting the mitochondrion. 2 disordered regions span residues 26–67 (LTNK…VGVS) and 92–114 (LKPEQENDSLTSAEKPDTSQLPP). Over residues 42–56 (SNKEGGDIKQSRITD) the composition is skewed to basic and acidic residues. PPR repeat units lie at residues 274–308 (KIDHYETMILAQVKNNHMEKIDGILALMKTKNIEI), 309–344 (SKMIYTSIVRGYIFYQKDHQKALETFDSMKFLSQKT), 347–381 (DEKVYTDVIVSCIMHREIEKALDLYYELKDKGMNV), 382–417 (NQNLLSTLAKGCSRSKQFKTQAWNFLFQIYDHGWVP), and 418–452 (NLQTYEHMLYIAARDGDVELTRALFYKMLQTNSVT). Residues 585–609 (PQQDEPTETVTATEQQNTSSNTSVI) are disordered. The span at 592-609 (ETVTATEQQNTSSNTSVI) shows a compositional bias: polar residues. Residues 631-661 (DSYLYNLAIKAAGKFKNYGFAQEILHERGQF) form a PPR 6 repeat.

It belongs to the CCM1 family. Binds to mitochondrial small subunit 15S rRNA.

It is found in the mitochondrion. Functionally, regulates mitochondrial small subunit maturation by controlling 15S rRNA 5'-end processing. Localizes to the 5' precursor of the 15S rRNA in a position that is subsequently occupied by mS47 in the mature yeast mtSSU. Uses structure and sequence-specific RNA recognition, binding to a single-stranded region of the precursor and specifically recognizing bases -6 to -1. The exchange of Ccm1 for mS47 is coupled to the irreversible removal of precursor rRNA that is accompanied by conformational changes of the mitoribosomal proteins uS5m and mS26. These conformational changes signal completion of 5'-end rRNA processing through protection of the mature 5'-end of the 15S rRNA and stabilization of mS47. The removal of the 5' precursor together with the dissociation of Ccm1 may be catalyzed by the 5'-3' exoribonuclease Pet127. Involved in the specific removal of group I introns in mitochondrial encoded transcripts. This chain is Mitochondrial 15S rRNA processing factor CCM1 (CCM1), found in Candida dubliniensis (strain CD36 / ATCC MYA-646 / CBS 7987 / NCPF 3949 / NRRL Y-17841) (Yeast).